The primary structure comprises 420 residues: MELLKEYNPYLEYRDGELFIEGVSLKELAQTFGTPLYVYSSNFIKERFEAYRKAFPDALICYAVKANFNPHLVKLLGELGAGADIVSGGELYLAKKAGIPPERIVYAGVGKTEKELTDAVDSEILMFNVESRQELDVLNEIAGKLGKKARIAIRVNPDVDPKTHPYIATGMQKSKFGVDIREAQKEYEYASKLENLEIVGIHCHIGSQILDISPYREAVEKVVSLYESLTQKGFDIKYLDIGGGLGIKYKPEDKEPAPQDLADLLKDLLENVKAKIILEPGRSIMGNAGILITQVQFLKDKGSKHFIIVDAGMNDLIRPSIYNAYHHIIPVETKERKKVVADIVGPICETGDFLALDREIEEVQRGEYLAVLSAGAYGFAMSSHYNMRPRAAEVLVENGSVKLIRKRENYDYIVEPSLDI.

At K65 the chain carries N6-(pyridoxal phosphate)lysine. Pyridoxal 5'-phosphate is bound by residues G244 and 279–282 (EPGR). Residues R282, R318, and Y322 each contribute to the substrate site. C348 serves as the catalytic Proton donor. E349 and Y377 together coordinate substrate. Y377 is a pyridoxal 5'-phosphate binding site.

This sequence belongs to the Orn/Lys/Arg decarboxylase class-II family. LysA subfamily. In terms of assembly, homodimer. The cofactor is pyridoxal 5'-phosphate.

The catalysed reaction is meso-2,6-diaminopimelate + H(+) = L-lysine + CO2. It functions in the pathway amino-acid biosynthesis; L-lysine biosynthesis via DAP pathway; L-lysine from DL-2,6-diaminopimelate: step 1/1. Specifically catalyzes the decarboxylation of meso-diaminopimelate (meso-DAP) to L-lysine. This chain is Diaminopimelate decarboxylase (lysA), found in Aquifex aeolicus (strain VF5).